Here is a 307-residue protein sequence, read N- to C-terminus: MSHIPVLLKETINALNIKKNGIYIDGTFGNGGHTKEILKYLGQSGKLYSIDQDIKSVNKGKKIKDKRFSIIFGKFSKKIPYIYKKNKKKKIDGILLDLGISSNQINQNDRGFSFMKNGLLDMRMNNTTGIPAWKWLKKSSQKEIEKVLRKYGEERYSKKISYAIYNRNKKKTITQTLDLVQIIKKAIPKIDKYKHPATRTFQAIRIHINNEIKELKKTLKISIKILKKKRRLVIICFHSLENRIVKNFFKKHGKTFFIPRGLPITEKKIKKIENKKIKIIKKIKPKKTEIQKNKRSRSAILRIAEML.

Residues 31–33 (GGH), Asp51, Tyr83, Asp97, and Gln104 each bind S-adenosyl-L-methionine.

The protein belongs to the methyltransferase superfamily. RsmH family.

The protein resides in the cytoplasm. The catalysed reaction is cytidine(1402) in 16S rRNA + S-adenosyl-L-methionine = N(4)-methylcytidine(1402) in 16S rRNA + S-adenosyl-L-homocysteine + H(+). Its function is as follows. Specifically methylates the N4 position of cytidine in position 1402 (C1402) of 16S rRNA. This is Ribosomal RNA small subunit methyltransferase H from Buchnera aphidicola subsp. Cinara cedri (strain Cc).